The primary structure comprises 307 residues: Junctional adhesion molecule 2A (307 aa).

A signal peptide spans Met-1–Pro-18. In terms of domain architecture, Ig-like V-type spans Val-19–Ser-112. Residues Val-19–Ala-226 lie on the Extracellular side of the membrane. Intrachain disulfides connect Cys-40/Cys-102 and Cys-147/Cys-197. The Ig-like C2-type domain maps to Pro-126–Ala-225. A helical transmembrane segment spans residues Val-227 to Leu-247. At Ala-248–Leu-307 the chain is on the cytoplasmic side. Residues Leu-278 to Gly-288 are compositionally biased toward polar residues. A disordered region spans residues Leu-278 to Leu-307. Basic and acidic residues predominate over residues Pro-292–His-301.

The protein belongs to the immunoglobulin superfamily.

It localises to the cell membrane. The protein localises to the cell junction. It is found in the tight junction. Its function is as follows. Junctional adhesion protein that mediates heterotypic cell-cell interactions to regulate different cellular processes. During myogenesis, it is involved in myocyte fusion through the binding of jam3b on neighboring myocytes. The protein is Junctional adhesion molecule 2A (jam2a) of Danio rerio (Zebrafish).